The sequence spans 401 residues: Beta-ketoadipyl-CoA thiolase (401 aa).

The active-site Acyl-thioester intermediate is the Cys90. Residues His357 and Cys387 each act as proton acceptor in the active site.

This sequence belongs to the thiolase-like superfamily. Thiolase family.

It carries out the reaction succinyl-CoA + acetyl-CoA = 3-oxoadipyl-CoA + CoA. The protein operates within aromatic compound metabolism; beta-ketoadipate pathway; acetyl-CoA and succinyl-CoA from 3-oxoadipate: step 2/2. In terms of biological role, catalyzes thiolytic cleavage of beta-ketoadipyl-CoA to succinyl-CoA and acetyl-CoA. The sequence is that of Beta-ketoadipyl-CoA thiolase (catF) from Acinetobacter baylyi (strain ATCC 33305 / BD413 / ADP1).